The primary structure comprises 231 residues: Dephospho-CoA kinase domain-containing protein (231 aa).

A DPCK domain is found at 3–207; it reads LVGLTGGIAS…RSLEYLPLRF (205 aa). 8–15 contacts ATP; it reads GGIASGKS.

The protein belongs to the CoaE family.

In Homo sapiens (Human), this protein is Dephospho-CoA kinase domain-containing protein (DCAKD).